We begin with the raw amino-acid sequence, 453 residues long: MNIVILAAGTGKRMRSALPKVLHPLAGRPLLSHVIDTARTLQPSRLVVVVGHGAEQVQAAVAAPDVQFAVQAEQLGTGHAVRQALPLLDPAQPTLVLYGDVPLTRASTLQRLVDAAREGRYGILTVTLDDPTGYGRIVRDAAGFVTRIVEQKDASPEQLKIAEINTGIIVTPTAQLSMWLGALKNENAQGEYYLTDVVELAIEAGFEVVTAQPDEEWETLGVNSKAQLAELERIHQRNIAEALLVDGVTLADPARLDVRGTLRCGRDVSIDVNCVFEGNVTLADNVTIGANCVIRNASVGAGTRIDAFTHIDGAELGAHTVIGPYARLRPGAQLADEAHVGNFVEVKNAVIGHGSKANHLTYIGDADIGARVNIGAGTITCNYDGANKFRTVIEDDVFVGSDTQLVAPVRVGRGVTIAAGTTIWKDVADGLLALNEKTQTAKSGYVRPVKKKS.

The segment at 1–225 (MNIVILAAGT…EWETLGVNSK (225 aa)) is pyrophosphorylase. Residues 6-9 (LAAG), Lys20, Gln71, 76-77 (GT), 98-100 (YGD), Gly135, Glu150, Asn165, and Asn223 each bind UDP-N-acetyl-alpha-D-glucosamine. Position 100 (Asp100) interacts with Mg(2+). Residue Asn223 coordinates Mg(2+). The segment at 226-246 (AQLAELERIHQRNIAEALLVD) is linker. Positions 247–453 (GVTLADPARL…GYVRPVKKKS (207 aa)) are N-acetyltransferase. UDP-N-acetyl-alpha-D-glucosamine-binding residues include Arg329 and Lys347. The active-site Proton acceptor is His359. 2 residues coordinate UDP-N-acetyl-alpha-D-glucosamine: Tyr362 and Asn373. Acetyl-CoA-binding positions include Ala376, 382–383 (NY), Ser401, and Ala419.

This sequence in the N-terminal section; belongs to the N-acetylglucosamine-1-phosphate uridyltransferase family. In the C-terminal section; belongs to the transferase hexapeptide repeat family. As to quaternary structure, homotrimer. The cofactor is Mg(2+).

It localises to the cytoplasm. It carries out the reaction alpha-D-glucosamine 1-phosphate + acetyl-CoA = N-acetyl-alpha-D-glucosamine 1-phosphate + CoA + H(+). It catalyses the reaction N-acetyl-alpha-D-glucosamine 1-phosphate + UTP + H(+) = UDP-N-acetyl-alpha-D-glucosamine + diphosphate. It participates in nucleotide-sugar biosynthesis; UDP-N-acetyl-alpha-D-glucosamine biosynthesis; N-acetyl-alpha-D-glucosamine 1-phosphate from alpha-D-glucosamine 6-phosphate (route II): step 2/2. It functions in the pathway nucleotide-sugar biosynthesis; UDP-N-acetyl-alpha-D-glucosamine biosynthesis; UDP-N-acetyl-alpha-D-glucosamine from N-acetyl-alpha-D-glucosamine 1-phosphate: step 1/1. Its pathway is bacterial outer membrane biogenesis; LPS lipid A biosynthesis. Catalyzes the last two sequential reactions in the de novo biosynthetic pathway for UDP-N-acetylglucosamine (UDP-GlcNAc). The C-terminal domain catalyzes the transfer of acetyl group from acetyl coenzyme A to glucosamine-1-phosphate (GlcN-1-P) to produce N-acetylglucosamine-1-phosphate (GlcNAc-1-P), which is converted into UDP-GlcNAc by the transfer of uridine 5-monophosphate (from uridine 5-triphosphate), a reaction catalyzed by the N-terminal domain. This chain is Bifunctional protein GlmU, found in Burkholderia lata (strain ATCC 17760 / DSM 23089 / LMG 22485 / NCIMB 9086 / R18194 / 383).